Consider the following 396-residue polypeptide: Elongation factor Tu 2 (396 aa).

Residues 10-206 (KPHCNVGTIG…AVDDYIPQPE (197 aa)) form the tr-type G domain. Residues 19–26 (GHVDHGKT) are G1. 19–26 (GHVDHGKT) serves as a coordination point for GTP. Thr-26 contributes to the Mg(2+) binding site. The tract at residues 60-64 (GITIS) is G2. Positions 81–84 (DCPG) are G3. Residues 81-85 (DCPGH) and 136-139 (NKCD) contribute to the GTP site. The segment at 136 to 139 (NKCD) is G4. The interval 174 to 176 (SAL) is G5.

The protein belongs to the TRAFAC class translation factor GTPase superfamily. Classic translation factor GTPase family. EF-Tu/EF-1A subfamily. In terms of assembly, monomer.

It localises to the cytoplasm. It catalyses the reaction GTP + H2O = GDP + phosphate + H(+). Its function is as follows. GTP hydrolase that promotes the GTP-dependent binding of aminoacyl-tRNA to the A-site of ribosomes during protein biosynthesis. This is Elongation factor Tu 2 from Rhodospirillum rubrum (strain ATCC 11170 / ATH 1.1.1 / DSM 467 / LMG 4362 / NCIMB 8255 / S1).